A 189-amino-acid chain; its full sequence is GTPase KRas (189 aa).

Met1 carries the N-acetylmethionine modification. N-acetylthreonine; in GTPase KRas, N-terminally processed is present on Thr2. Residues 10 to 18 (GAGGVGKSA), 29 to 35 (VDEYDPT), and 59 to 60 (AG) each bind GTP. An Effector region motif is present at residues 32–40 (YDPTIEDSY). Lys104 carries the N6-acetyllysine modification. Residue 116 to 119 (NKCD) participates in GTP binding. Residues 166–185 (YRLKKISKEEKTPGCVKIKK) form a hypervariable region region. Residue Lys170 forms a Glycyl lysine isopeptide (Lys-Gly) (interchain with G-Cter in ubiquitin) linkage. Cys180 carries the S-palmitoyl cysteine lipid modification. N6-palmitoyl lysine attachment occurs at residues Lys182, Lys184, and Lys185. A Cysteine methyl ester modification is found at Cys186. Cys186 is lipidated: S-farnesyl cysteine. Positions 187–189 (VIM) are cleaved as a propeptide — removed in mature form.

Belongs to the small GTPase superfamily. Ras family. Interacts with PHLPP. Interacts (active GTP-bound form preferentially) with RGS14. Interacts (when farnesylated) with PDE6D; this promotes dissociation from the cell membrane. Interacts with SOS1. Interacts (when farnesylated) with GPR31. Interacts with RAP1GDS1. Interacts (active GTP-bound form) with both SHOC2 and PP1c (all isoforms) to form a tertiary complex; SHOC2 and PP1c preferably bind M-Ras/MRAS, but they also bind K-Ras/KRAS, N-Ras/NRAS and H-Ras/HRAS. Interacts (GTP-bound form) with MAPKAP1/SIN1; inhibiting K-Ras/KRAS activity. In terms of assembly, interacts (when farnesylated) with GPR31. Post-translationally, acetylation at Lys-104 prevents interaction with guanine nucleotide exchange factors (GEFs). Ubiquitinated by the BCR(LZTR1) E3 ubiquitin ligase complex at Lys-170 in a non-degradative manner, leading to inhibit Ras signaling by decreasing Ras association with membranes. In terms of processing, palmitoylated at Lys-182, Lys-184 and Lys-185. Lysine-depalmitoylation by SIRT2 promotes its localization to endomembranes in endocytic pathways.

It localises to the cell membrane. It is found in the endomembrane system. The protein localises to the cytoplasm. Its subcellular location is the cytosol. It catalyses the reaction GTP + H2O = GDP + phosphate + H(+). With respect to regulation, alternates between an inactive form bound to GDP and an active form bound to GTP. Activated by a guanine nucleotide-exchange factor (GEF) and inactivated by a GTPase-activating protein (GAP). Interaction with SOS1 promotes exchange of bound GDP to GTP. Functionally, ras proteins bind GDP/GTP and possess intrinsic GTPase activity. Plays an important role in the regulation of cell proliferation. Plays a role in promoting oncogenic events by inducing transcriptional silencing of tumor suppressor genes (TSGs) in colorectal cancer (CRC) cells in a ZNF304-dependent manner. This Rattus norvegicus (Rat) protein is GTPase KRas (Kras).